A 175-amino-acid chain; its full sequence is General odorant-binding protein 84a (175 aa).

The signal sequence occupies residues Met1 to Ala24. Cystine bridges form between Cys103–Cys151 and Cys140–Cys160.

As to expression, present only in a small number of hairs scattered over the surface of the funiculus.

Its subcellular location is the secreted. This chain is General odorant-binding protein 84a (Obp84a), found in Drosophila melanogaster (Fruit fly).